The chain runs to 438 residues: tRNA(Ile)-lysidine synthase (438 aa).

Position 19-24 (19-24) interacts with ATP; that stretch reads SGGIDS.

Belongs to the tRNA(Ile)-lysidine synthase family.

Its subcellular location is the cytoplasm. The catalysed reaction is cytidine(34) in tRNA(Ile2) + L-lysine + ATP = lysidine(34) in tRNA(Ile2) + AMP + diphosphate + H(+). Its function is as follows. Ligates lysine onto the cytidine present at position 34 of the AUA codon-specific tRNA(Ile) that contains the anticodon CAU, in an ATP-dependent manner. Cytidine is converted to lysidine, thus changing the amino acid specificity of the tRNA from methionine to isoleucine. This Buchnera aphidicola subsp. Baizongia pistaciae (strain Bp) protein is tRNA(Ile)-lysidine synthase.